Here is a 403-residue protein sequence, read N- to C-terminus: SEC14-like protein 2 (403 aa).

Position 51 is an N6-succinyllysine (Lys-51). A CRAL-TRIO domain is found at 76-249 (PPEVIQQYLS…EYGGTMTDPD (174 aa)). N6-succinyllysine is present on residues Lys-253 and Lys-257. In terms of domain architecture, GOLD spans 275 to 383 (KQQYEHSVQI…AKKVNFTVEV (109 aa)). At Lys-393 the chain carries N6-succinyllysine.

As to quaternary structure, monomer. In terms of tissue distribution, widely expressed. Strong expression in liver, brain and prostate.

It is found in the cytoplasm. The protein resides in the nucleus. In terms of biological role, carrier protein. Binds to some hydrophobic molecules and promotes their transfer between the different cellular sites. Binds with high affinity to alpha-tocopherol. Also binds with a weaker affinity to other tocopherols and to tocotrienols. May have a transcriptional activatory activity via its association with alpha-tocopherol. Probably recognizes and binds some squalene structure, suggesting that it may regulate cholesterol biosynthesis by increasing the transfer of squalene to a metabolic active pool in the cell. The sequence is that of SEC14-like protein 2 (SEC14L2) from Homo sapiens (Human).